Here is a 241-residue protein sequence, read N- to C-terminus: Polycomb group RING finger protein 3 (241 aa).

An RING-type zinc finger spans residues 17-56; the sequence is CRLCSGYLIDATTVTECLHTFCRSCLVKYLEENNTCPTCR. A disordered region spans residues 115-148; sequence AKQHLDPRNGETKADDNSNKETAEEKQEEDNDYH. Positions 117-139 are enriched in basic and acidic residues; that stretch reads QHLDPRNGETKADDNSNKETAEE. Positions 131–241 are interaction with BCORL1; that stretch reads NSNKETAEEK…LHYRPKMDLL (111 aa).

In terms of assembly, component of a PRC1-like complex that contains PCGF3, RNF2 and RYBP. Interacts with RNF2. Interacts with CBX6, CBX7 and CBX8. Interacts with BCORL1.

Its subcellular location is the nucleus. The protein localises to the nucleoplasm. In terms of biological role, component of a Polycomb group (PcG) multiprotein PRC1-like complex, a complex class required to maintain the transcriptionally repressive state of many genes, including Hox genes, throughout development. PcG PRC1 complex acts via chromatin remodeling and modification of histones; it mediates monoubiquitination of histone H2A 'Lys-119', rendering chromatin heritably changed in its expressibility. Within the PRC1-like complex, regulates RNF2 ubiquitin ligase activity. Plays a redundant role with PCGF5 as part of a PRC1-like complex that mediates monoubiquitination of histone H2A 'Lys-119' on the X chromosome and is required for normal silencing of one copy of the X chromosome in XX females. The chain is Polycomb group RING finger protein 3 (PcgF3) from Mus musculus (Mouse).